Reading from the N-terminus, the 299-residue chain is Formylglycine-generating enzyme (299 aa).

Positions 263 and 268 each coordinate Cu cation.

The protein belongs to the sulfatase-modifying factor family. Requires Cu cation as cofactor.

It carries out the reaction L-cysteinyl-[sulfatase] + 2 a thiol + O2 = an organic disulfide + 3-oxo-L-alanyl-[sulfatase] + hydrogen sulfide + H2O + H(+). Its pathway is protein modification; sulfatase oxidation. Functionally, oxidase that catalyzes the conversion of cysteine to 3-oxoalanine on target proteins. 3-oxoalanine modification, which is also named formylglycine (fGly), occurs in the maturation of arylsulfatases and some alkaline phosphatases that use the hydrated form of 3-oxoalanine as a catalytic nucleophile. This is Formylglycine-generating enzyme from Mycobacterium tuberculosis (strain ATCC 25618 / H37Rv).